The sequence spans 333 residues: DNA-directed RNA polymerase subunit alpha (333 aa).

The segment at 1–234 is alpha N-terminal domain (alpha-NTD); it reads MQISVNEFLT…QQLAAFVDLK (234 aa). An alpha C-terminal domain (alpha-CTD) region spans residues 248–333; sequence IDPILLRPVD…SLKKDDKATA (86 aa).

This sequence belongs to the RNA polymerase alpha chain family. In terms of assembly, homodimer. The RNAP catalytic core consists of 2 alpha, 1 beta, 1 beta' and 1 omega subunit. When a sigma factor is associated with the core the holoenzyme is formed, which can initiate transcription.

The enzyme catalyses RNA(n) + a ribonucleoside 5'-triphosphate = RNA(n+1) + diphosphate. DNA-dependent RNA polymerase catalyzes the transcription of DNA into RNA using the four ribonucleoside triphosphates as substrates. This is DNA-directed RNA polymerase subunit alpha from Pseudomonas syringae pv. tomato (strain ATCC BAA-871 / DC3000).